Reading from the N-terminus, the 176-residue chain is Large ribosomal subunit protein uL10 (176 aa).

It belongs to the universal ribosomal protein uL10 family. As to quaternary structure, part of the ribosomal stalk of the 50S ribosomal subunit. The N-terminus interacts with L11 and the large rRNA to form the base of the stalk. The C-terminus forms an elongated spine to which L12 dimers bind in a sequential fashion forming a multimeric L10(L12)X complex.

Functionally, forms part of the ribosomal stalk, playing a central role in the interaction of the ribosome with GTP-bound translation factors. The sequence is that of Large ribosomal subunit protein uL10 from Coprothermobacter proteolyticus (strain ATCC 35245 / DSM 5265 / OCM 4 / BT).